The chain runs to 724 residues: Phenylalanine ammonia-lyase (724 aa).

Tyr-91 acts as the Proton donor/acceptor in catalysis. The segment at residues 205–207 (ASG) is a cross-link (5-imidazolinone (Ala-Gly)). 2,3-didehydroalanine (Ser) is present on Ser-206. Residues Asn-265, Gln-357, Arg-363, Asn-393, Lys-467, Glu-495, and Asn-498 each coordinate (E)-cinnamate.

This sequence belongs to the PAL/histidase family. In terms of assembly, homotetramer. In terms of processing, contains an active site 4-methylidene-imidazol-5-one (MIO), which is formed autocatalytically by cyclization and dehydration of residues Ala-Ser-Gly.

Its subcellular location is the cytoplasm. It carries out the reaction L-phenylalanine = (E)-cinnamate + NH4(+). It functions in the pathway phenylpropanoid metabolism; trans-cinnamate biosynthesis; trans-cinnamate from L-phenylalanine: step 1/1. Functionally, catalyzes the non-oxidative deamination of L-phenylalanine to form trans-cinnamic acid and a free ammonium ion. Facilitates the commitment step in phenylpropanoid pathways that produce secondary metabolites such as lignins, coumarins and flavonoids. This chain is Phenylalanine ammonia-lyase (PAL1), found in Mycosarcoma maydis (Corn smut fungus).